The following is an 86-amino-acid chain: Mitochondrial import inner membrane translocase subunit Tim10 (86 aa).

Residues 29–54 (CQAKCIATAFKESELTKGEAVCLDRC) carry the Twin CX3C motif motif. 2 disulfide bridges follow: cysteine 29-cysteine 54 and cysteine 33-cysteine 50.

It belongs to the small Tim family. As to quaternary structure, heterohexamer; composed of 3 copies of tim-9/tin-9.1 and 3 copies of tim-10/tin-10, named soluble 70 kDa complex. The complex associates with the tim-22 component of the TIM22 complex. Interacts with multi-pass transmembrane proteins in transit.

It localises to the mitochondrion inner membrane. In terms of biological role, mitochondrial intermembrane chaperone that participates in the import and insertion of multi-pass transmembrane proteins into the mitochondrial inner membrane. May also be required for the transfer of beta-barrel precursors from the TOM complex to the sorting and assembly machinery (SAM complex) of the outer membrane. Acts as a chaperone-like protein that protects the hydrophobic precursors from aggregation and guide them through the mitochondrial intermembrane space. This is Mitochondrial import inner membrane translocase subunit Tim10 (tin-10) from Caenorhabditis briggsae.